A 205-amino-acid chain; its full sequence is ATP-dependent Clp protease proteolytic subunit (205 aa).

S109 serves as the catalytic Nucleophile. H134 is an active-site residue.

The protein belongs to the peptidase S14 family. Fourteen ClpP subunits assemble into 2 heptameric rings which stack back to back to give a disk-like structure with a central cavity, resembling the structure of eukaryotic proteasomes.

Its subcellular location is the cytoplasm. It carries out the reaction Hydrolysis of proteins to small peptides in the presence of ATP and magnesium. alpha-casein is the usual test substrate. In the absence of ATP, only oligopeptides shorter than five residues are hydrolyzed (such as succinyl-Leu-Tyr-|-NHMec, and Leu-Tyr-Leu-|-Tyr-Trp, in which cleavage of the -Tyr-|-Leu- and -Tyr-|-Trp bonds also occurs).. Its function is as follows. Cleaves peptides in various proteins in a process that requires ATP hydrolysis. Has a chymotrypsin-like activity. Plays a major role in the degradation of misfolded proteins. This Baumannia cicadellinicola subsp. Homalodisca coagulata protein is ATP-dependent Clp protease proteolytic subunit.